Here is a 278-residue protein sequence, read N- to C-terminus: Cytoplasmic envelopment protein 1 (278 aa).

The protein belongs to the herpesviridae cytoplasmic envelopment protein 1 family.

Its subcellular location is the virion. The protein localises to the virion tegument. The protein resides in the host cytoplasm. It is found in the host Golgi apparatus. Functionally, plays a critical role in cytoplasmic virus egress. Participates in the final step of tegumentation and envelope acquisition within the host cytoplasm. The chain is Cytoplasmic envelopment protein 1 (ORF42) from Homo sapiens (Human).